We begin with the raw amino-acid sequence, 434 residues long: Epimerase FSL3 (434 aa).

A substrate-binding site is contributed by 125–126 (GF). Glutamate 392 serves as the catalytic Proton acceptor.

This sequence belongs to the aldose epimerase family. Monomer.

The protein operates within secondary metabolite biosynthesis. Epimerase; part of the gene cluster that mediates the biosynthesis of fusarielins F, G and H, decaketide compounds with 5 methylations and a decaline core that act as mycoestrogens as they stimulate growth of MCF-7 breast cancer cells. The initial compound in the pathway is produced by the reducing polyketide synthase FSL1. FSL1 lacks an active enoyl reductase (ER) domain and biosynthesis of fusarielins relies on the trans-acting enoyl reductase FSL5, before it is released through hydrolysis catalyzed by the thioesterase FSL2. Fusarielins F, G, and H have a C11=C12 cis double bond and is fully reduced between C10 and C11 and between C12 and C13. FSL3 can be involved in the formation of the C11=C12 cis double bond by moving a hypothetical C10=C11 or C12=C13 trans double bond to form prefusarielin. Prefusarielin is oxygenated at C15 and C16 by the cytochrome P450 monooxygenase FSL4, resulting in fusarielin F, which subsequently is epoxidized into fusarielin G by the same enzyme. The final step in the pathway is a reduction of the carboxylic acid moiety to yield fusarielin H via a still undetermined mechanism. The protein is Epimerase FSL3 of Gibberella zeae (strain ATCC MYA-4620 / CBS 123657 / FGSC 9075 / NRRL 31084 / PH-1) (Wheat head blight fungus).